We begin with the raw amino-acid sequence, 466 residues long: uncharacterized protein (466 aa).

The tract at residues 1-22 is disordered; it reads MKKNNERVNTNPSLISKSYNMK. Positions 7 to 19 are enriched in polar residues; sequence RVNTNPSLISKSY. Residues serine 40 and serine 42 each carry the phosphoserine modification. The RRM domain occupies 108-183; sequence YFVHMDNISP…RLISATITNH (76 aa). The interval 186-207 is disordered; that stretch reads RLPNAEHLESSTKTKDESQDKD. Residues 188–207 are compositionally biased toward basic and acidic residues; sequence PNAEHLESSTKTKDESQDKD. The CID domain occupies 209 to 368; that stretch reads LTKLDRAKLE…RAWRNFSGNT (160 aa). Phosphoserine is present on serine 371. Over residues 425–436 the composition is skewed to low complexity; sequence STETSSSSSPQP. The interval 425 to 448 is disordered; the sequence is STETSSSSSPQPTEERKAKFKPSF.

It is found in the nucleus. The protein resides in the cytoplasm. This is an uncharacterized protein from Schizosaccharomyces pombe (strain 972 / ATCC 24843) (Fission yeast).